A 462-amino-acid polypeptide reads, in one-letter code: tRNA modification GTPase MnmE (462 aa).

The (6S)-5-formyl-5,6,7,8-tetrahydrofolate site is built by arginine 23, glutamate 88, and arginine 127. Positions 224 to 383 constitute a TrmE-type G domain; the sequence is GLATVIIGRP…LEKAIADLFF (160 aa). Asparagine 234 lines the K(+) pocket. Residues 234–239, 253–259, and 278–281 contribute to the GTP site; these read NVGKSS, TDIPGTT, and DTAG. A Mg(2+)-binding site is contributed by serine 238. K(+) contacts are provided by threonine 253, isoleucine 255, and threonine 258. Threonine 259 serves as a coordination point for Mg(2+). Lysine 462 lines the (6S)-5-formyl-5,6,7,8-tetrahydrofolate pocket.

The protein belongs to the TRAFAC class TrmE-Era-EngA-EngB-Septin-like GTPase superfamily. TrmE GTPase family. In terms of assembly, homodimer. Heterotetramer of two MnmE and two MnmG subunits. The cofactor is K(+).

It localises to the cytoplasm. Exhibits a very high intrinsic GTPase hydrolysis rate. Involved in the addition of a carboxymethylaminomethyl (cmnm) group at the wobble position (U34) of certain tRNAs, forming tRNA-cmnm(5)s(2)U34. In Geobacillus kaustophilus (strain HTA426), this protein is tRNA modification GTPase MnmE.